A 637-amino-acid chain; its full sequence is 3D-(3,5/4)-trihydroxycyclohexane-1,2-dione hydrolase (637 aa).

A thiamine diphosphate-binding site is contributed by Glu-66. The tract at residues 442-522 (SLPGDLQRLW…INVLLFDNSG (81 aa)) is thiamine pyrophosphate binding. Mg(2+) is bound by residues Asp-493 and Asn-520.

The protein belongs to the TPP enzyme family. It depends on Mg(2+) as a cofactor. Requires thiamine diphosphate as cofactor.

The catalysed reaction is 3D-3,5/4-trihydroxycyclohexane-1,2-dione + H2O = 5-deoxy-D-glucuronate + H(+). It functions in the pathway polyol metabolism; myo-inositol degradation into acetyl-CoA; acetyl-CoA from myo-inositol: step 3/7. Functionally, involved in the cleavage of the C1-C2 bond of 3D-(3,5/4)-trihydroxycyclohexane-1,2-dione (THcHDO) to yield 5-deoxy-glucuronate (5DG). This is 3D-(3,5/4)-trihydroxycyclohexane-1,2-dione hydrolase from Bacillus velezensis (strain DSM 23117 / BGSC 10A6 / LMG 26770 / FZB42) (Bacillus amyloliquefaciens subsp. plantarum).